Reading from the N-terminus, the 106-residue chain is Large ribosomal subunit protein uL24 (106 aa).

The protein belongs to the universal ribosomal protein uL24 family. Part of the 50S ribosomal subunit.

One of two assembly initiator proteins, it binds directly to the 5'-end of the 23S rRNA, where it nucleates assembly of the 50S subunit. Its function is as follows. One of the proteins that surrounds the polypeptide exit tunnel on the outside of the subunit. This chain is Large ribosomal subunit protein uL24, found in Albidiferax ferrireducens (strain ATCC BAA-621 / DSM 15236 / T118) (Rhodoferax ferrireducens).